Consider the following 552-residue polypeptide: Cation/acetate symporter ActP (552 aa).

14 helical membrane passes run 6-26 (LLAV…AIAG), 35-55 (MEAI…TYWA), 78-98 (GLAM…SALV), 103-123 (FDGL…LFLI), 151-171 (LSAC…MVGA), 185-205 (VAVV…GMLA), 208-228 (WVQI…AIMV), 264-284 (ISAL…PHIL), 305-325 (GLMG…ILLV), 357-377 (LFLG…VAGL), 407-427 (VSKI…ILFE), 431-451 (IAFM…PIIL), 467-487 (GGWL…TIWV), and 496-516 (IFPY…GTWL).

Belongs to the sodium:solute symporter (SSF) (TC 2.A.21) family.

The protein localises to the cell inner membrane. In terms of biological role, transports acetate. This Erwinia tasmaniensis (strain DSM 17950 / CFBP 7177 / CIP 109463 / NCPPB 4357 / Et1/99) protein is Cation/acetate symporter ActP.